The following is a 362-amino-acid chain: 3-isopropylmalate dehydrogenase (362 aa).

Residue 78–91 participates in NAD(+) binding; the sequence is GYKWDSLPPHQRPE. Substrate is bound by residues Arg98, Arg108, Arg136, and Asp226. 3 residues coordinate Mg(2+): Asp226, Asp250, and Asp254. 284–296 contacts NAD(+); sequence GSAPDIAGLDKAN.

It belongs to the isocitrate and isopropylmalate dehydrogenases family. LeuB type 1 subfamily. In terms of assembly, homodimer. The cofactor is Mg(2+). It depends on Mn(2+) as a cofactor.

It localises to the cytoplasm. The catalysed reaction is (2R,3S)-3-isopropylmalate + NAD(+) = 4-methyl-2-oxopentanoate + CO2 + NADH. It functions in the pathway amino-acid biosynthesis; L-leucine biosynthesis; L-leucine from 3-methyl-2-oxobutanoate: step 3/4. Its function is as follows. Catalyzes the oxidation of 3-carboxy-2-hydroxy-4-methylpentanoate (3-isopropylmalate) to 3-carboxy-4-methyl-2-oxopentanoate. The product decarboxylates to 4-methyl-2 oxopentanoate. The protein is 3-isopropylmalate dehydrogenase of Trichormus variabilis (strain ATCC 29413 / PCC 7937) (Anabaena variabilis).